The primary structure comprises 186 residues: Large ribosomal subunit protein uL6 (186 aa).

The protein belongs to the universal ribosomal protein uL6 family. Part of the 50S ribosomal subunit.

This protein binds to the 23S rRNA, and is important in its secondary structure. It is located near the subunit interface in the base of the L7/L12 stalk, and near the tRNA binding site of the peptidyltransferase center. The chain is Large ribosomal subunit protein uL6 from Ignicoccus hospitalis (strain KIN4/I / DSM 18386 / JCM 14125).